A 181-amino-acid polypeptide reads, in one-letter code: Large ribosomal subunit protein eL18 (181 aa).

The tract at residues 152–181 is disordered; that stretch reads WGKAPGQRGSHSAPYVRSEGRKFERAHGLK. The segment covering 169-181 has biased composition (basic and acidic residues); the sequence is SEGRKFERAHGLK.

This sequence belongs to the eukaryotic ribosomal protein eL18 family.

It localises to the cytoplasm. This chain is Large ribosomal subunit protein eL18 (RPL18), found in Tetrahymena thermophila.